Consider the following 300-residue polypeptide: Secreted mono- and diacylglycerol lipase LIP4 (300 aa).

The N-terminal stretch at 1–16 (MRFLAFLLCLVPLALC) is a signal peptide. Residues Cys-54 and Cys-293 are joined by a disulfide bond. The active-site Nucleophile is Ser-167. Asp-224 is a catalytic residue.

This sequence belongs to the AB hydrolase superfamily. Lipase family. Class 3 subfamily.

It is found in the secreted. The catalysed reaction is a monoacylglycerol + H2O = glycerol + a fatty acid + H(+). It catalyses the reaction a diacylglycerol + H2O = a monoacylglycerol + a fatty acid + H(+). Secreted lipase involved in Dandruff and seborrheic dermatitis (D/SD) probably via lipase-mediated breakdown of sebaceous lipids and release of irritating free fatty acids. Shows activity against monoglyceride and diglyceride substrates. Due to an absence of fatty acid synthase genes in Malassezia species, secretory lipases are essential for the yeast to generate free fatty acids from degradation of sebum and assimilate them as lipid sources for growth. Plays an essential role at the pathogen-host interface during disease progression. The sequence is that of Secreted mono- and diacylglycerol lipase LIP4 from Malassezia restricta (Seborrheic dermatitis infection agent).